A 285-amino-acid polypeptide reads, in one-letter code: UPF0354 protein SACOL1793 (285 aa).

Belongs to the UPF0354 family.

In Staphylococcus aureus (strain COL), this protein is UPF0354 protein SACOL1793.